A 541-amino-acid chain; its full sequence is Apolipoprotein N-acyltransferase (541 aa).

The next 6 membrane-spanning stretches (helical) occupy residues 21–41 (MSWF…WYSL), 54–74 (LTSL…SWML), 89–109 (VLIS…FFIV), 116–136 (ILWC…YFLC), 157–177 (FGGF…GISF), and 189–209 (YVWL…YEYL). Residues 219-500 (LRVAVIQPAS…PGVLQVSLPM (282 aa)) form the CN hydrolase domain. The Proton acceptor role is filled by E265. The active site involves K350. C405 functions as the Nucleophile in the catalytic mechanism. Residues 506–526 (LYAFWGDFPMIFLSLLSIGCI) form a helical membrane-spanning segment.

It belongs to the CN hydrolase family. Apolipoprotein N-acyltransferase subfamily.

It is found in the cell inner membrane. It catalyses the reaction N-terminal S-1,2-diacyl-sn-glyceryl-L-cysteinyl-[lipoprotein] + a glycerophospholipid = N-acyl-S-1,2-diacyl-sn-glyceryl-L-cysteinyl-[lipoprotein] + a 2-acyl-sn-glycero-3-phospholipid + H(+). Its pathway is protein modification; lipoprotein biosynthesis (N-acyl transfer). Functionally, catalyzes the phospholipid dependent N-acylation of the N-terminal cysteine of apolipoprotein, the last step in lipoprotein maturation. The polypeptide is Apolipoprotein N-acyltransferase (Chlamydia caviae (strain ATCC VR-813 / DSM 19441 / 03DC25 / GPIC) (Chlamydophila caviae)).